The following is an 83-amino-acid chain: RNA-binding protein Hfq (83 aa).

The Sm domain occupies 10–70 (DAFLNQVRKE…ISTVSPLKPV (61 aa)).

It belongs to the Hfq family. In terms of assembly, homohexamer.

In terms of biological role, RNA chaperone that binds small regulatory RNA (sRNAs) and mRNAs to facilitate mRNA translational regulation in response to envelope stress, environmental stress and changes in metabolite concentrations. Also binds with high specificity to tRNAs. The chain is RNA-binding protein Hfq from Pelotomaculum thermopropionicum (strain DSM 13744 / JCM 10971 / SI).